A 495-amino-acid chain; its full sequence is UDP-N-acetylmuramoyl-L-alanyl-D-glutamate--2,6-diaminopimelate ligase (495 aa).

UDP-N-acetyl-alpha-D-muramoyl-L-alanyl-D-glutamate contacts are provided by residues leucine 27, serine 29, and 44–46; that span reads HQA. Position 116–122 (116–122) interacts with ATP; sequence GTNGKTT. UDP-N-acetyl-alpha-D-muramoyl-L-alanyl-D-glutamate contacts are provided by residues asparagine 157, 158–159, serine 185, glutamine 191, and arginine 193; that span reads TT. Lysine 225 carries the N6-carboxylysine modification. Residues arginine 390, 414–417, glycine 465, and glutamate 469 each bind meso-2,6-diaminopimelate; that span reads DNPR. A Meso-diaminopimelate recognition motif motif is present at residues 414–417; it reads DNPR.

Belongs to the MurCDEF family. MurE subfamily. Requires Mg(2+) as cofactor. Carboxylation is probably crucial for Mg(2+) binding and, consequently, for the gamma-phosphate positioning of ATP.

The protein localises to the cytoplasm. It catalyses the reaction UDP-N-acetyl-alpha-D-muramoyl-L-alanyl-D-glutamate + meso-2,6-diaminopimelate + ATP = UDP-N-acetyl-alpha-D-muramoyl-L-alanyl-gamma-D-glutamyl-meso-2,6-diaminopimelate + ADP + phosphate + H(+). It participates in cell wall biogenesis; peptidoglycan biosynthesis. Functionally, catalyzes the addition of meso-diaminopimelic acid to the nucleotide precursor UDP-N-acetylmuramoyl-L-alanyl-D-glutamate (UMAG) in the biosynthesis of bacterial cell-wall peptidoglycan. This Escherichia coli O6:H1 (strain CFT073 / ATCC 700928 / UPEC) protein is UDP-N-acetylmuramoyl-L-alanyl-D-glutamate--2,6-diaminopimelate ligase.